The following is a 503-amino-acid chain: Cytochrome c lysine N-methyltransferase 1 (503 aa).

An SET domain is found at 52–276 (SKFELLRIPR…EEAQVFISYA (225 aa)). Residues 190–291 (NYEKLISTVY…VHFEQIYGFL (102 aa)) form an SET-like region.

It belongs to the class V-like SAM-binding methyltransferase superfamily.

It is found in the cytoplasm. The protein resides in the cytosol. The enzyme catalyses L-lysyl-[cytochrome c] + S-adenosyl-L-methionine = N(6)-methyl-L-lysyl-[cytochrome c] + S-adenosyl-L-homocysteine + H(+). Functionally, methyltransferase which mediates trimethylation of cytochrome c (CYC1). This chain is Cytochrome c lysine N-methyltransferase 1 (CTM1), found in Kluyveromyces lactis (strain ATCC 8585 / CBS 2359 / DSM 70799 / NBRC 1267 / NRRL Y-1140 / WM37) (Yeast).